Here is a 238-residue protein sequence, read N- to C-terminus: Uridylate kinase (238 aa).

12–15 (KLSG) serves as a coordination point for ATP. Residues 20–25 (GEKGFG) are involved in allosteric activation by GTP. G54 is a UMP binding site. G55 and R59 together coordinate ATP. UMP is bound by residues D72 and 133 to 140 (TGNPYFST). ATP-binding residues include Y166 and D169.

The protein belongs to the UMP kinase family. In terms of assembly, homohexamer.

The protein resides in the cytoplasm. It carries out the reaction UMP + ATP = UDP + ADP. It participates in pyrimidine metabolism; CTP biosynthesis via de novo pathway; UDP from UMP (UMPK route): step 1/1. Its activity is regulated as follows. Allosterically activated by GTP. Inhibited by UTP. Its function is as follows. Catalyzes the reversible phosphorylation of UMP to UDP. The sequence is that of Uridylate kinase from Clostridium botulinum (strain Hall / ATCC 3502 / NCTC 13319 / Type A).